The primary structure comprises 199 residues: Chaperone protein TorD (199 aa).

The protein belongs to the TorD/DmsD family. TorD subfamily.

Its subcellular location is the cytoplasm. Its function is as follows. Involved in the biogenesis of TorA. Acts on TorA before the insertion of the molybdenum cofactor and, as a result, probably favors a conformation of the apoenzyme that is competent for acquiring the cofactor. This is Chaperone protein TorD from Escherichia coli O81 (strain ED1a).